The chain runs to 91 residues: Class I hydrophobin E (91 aa).

The first 16 residues, Met1 to Ala16, serve as a signal peptide directing secretion. Cystine bridges form between Cys30/Cys72, Cys42/Cys64, Cys43/Cys55, and Cys73/Cys89. An N-linked (GlcNAc...) asparagine glycan is attached at Asn83.

This sequence belongs to the fungal hydrophobin family.

Its subcellular location is the secreted. It localises to the cell wall. It is found in the vacuole. The protein localises to the cytoplasmic vesicle. In terms of biological role, aerial growth, conidiation, and dispersal of filamentous fungi in the environment rely upon a capability of their secreting small amphipathic proteins called hydrophobins (HPBs) with low sequence identity. Class I can self-assemble into an outermost layer of rodlet bundles on aerial cell surfaces, conferring cellular hydrophobicity that supports fungal growth, development and dispersal; whereas Class II form highly ordered films at water-air interfaces through intermolecular interactions but contribute nothing to the rodlet structure. Hyd1E contributes to certain cell wall-related features, such as hydrophobicity but is not involved in cell wall-related events during fungal proliferation in host hemocoel. Does not contribute to conidial hydrophobicity. The sequence is that of Class I hydrophobin E from Beauveria bassiana (strain ARSEF 2860) (White muscardine disease fungus).